A 37-amino-acid polypeptide reads, in one-letter code: Photosystem II reaction center protein T (37 aa).

Residues 3 to 23 (ALVYTFLLVSTLGILFFAIFF) form a helical membrane-spanning segment.

It belongs to the PsbT family. In terms of assembly, PSII is composed of 1 copy each of membrane proteins PsbA, PsbB, PsbC, PsbD, PsbE, PsbF, PsbH, PsbI, PsbJ, PsbK, PsbL, PsbM, PsbT, PsbY, PsbZ, Psb30/Ycf12, at least 3 peripheral proteins of the oxygen-evolving complex and a large number of cofactors. It forms dimeric complexes.

It is found in the plastid. It localises to the chloroplast thylakoid membrane. In terms of biological role, found at the monomer-monomer interface of the photosystem II (PS II) dimer, plays a role in assembly and dimerization of PSII. PSII is a light-driven water plastoquinone oxidoreductase, using light energy to abstract electrons from H(2)O, generating a proton gradient subsequently used for ATP formation. This is Photosystem II reaction center protein T from Ephedra sinica (Chinese ephedra).